The sequence spans 123 residues: Fluoride-specific ion channel FluC (123 aa).

The next 4 membrane-spanning stretches (helical) occupy residues 5–25, 29–49, 65–85, and 94–114; these read LIIG…SGII, FGIP…VGFV, LIIT…YETF, and IKFL…IYVG. Gly-72 and Thr-75 together coordinate Na(+).

The protein belongs to the fluoride channel Fluc/FEX (TC 1.A.43) family.

It is found in the cell membrane. It carries out the reaction fluoride(in) = fluoride(out). Its activity is regulated as follows. Na(+) is not transported, but it plays an essential structural role and its presence is essential for fluoride channel function. In terms of biological role, fluoride-specific ion channel. Important for reducing fluoride concentration in the cell, thus reducing its toxicity. The chain is Fluoride-specific ion channel FluC from Methanococcus aeolicus (strain ATCC BAA-1280 / DSM 17508 / OCM 812 / Nankai-3).